A 184-amino-acid polypeptide reads, in one-letter code: MGIDLVKAGRVKKPGRKALVSKNPYLRLLVKLYKFLSRRTDHSFNKVVLKRLLMPRRFKAPLSLSKLSKHMEKRPDNTAVVVGTVTNDERMDVVPKLSVCALRVTETARKRILASGGEVLTFDQLVARSPTGSRCTLLRGATKAREAVKHFRNEVKGNPKPYVRSKGRKFEKARGRRHSRAFKV.

It belongs to the eukaryotic ribosomal protein eL18 family.

The protein resides in the cytoplasm. The polypeptide is Large ribosomal subunit protein eL18 (RPL18) (Theileria parva (East coast fever infection agent)).